Consider the following 616-residue polypeptide: MALLQISEPGLSAAPHQRRLAAGIDLGTTNSLVATVRSGQAETLADHEGRHLLPSVVHYQQQGHSVGYDARTNAALDTANTISSVKRLMGRSLADIQQRYPHLPYQFQASENGLPMIETAAGLLNPVRVSADILKALAARATEALAGELDGVVITVPAYFDDAQRQGTKDAARLAGLHVLRLLNEPTAAAIAYGLDSGQEGVIAVYDLGGGTFDISILRLSRGVFEVLATGGDSALGGDDFDHLLADYIREQAGIPDRSDNRVQRELLDAAIAAKIALSDADSVTVNVAGWQGEISREQFNELIAPLVKRTLLACRRALKDAGVEADEVLEVVVVGGSTRVPLVRERVGEFFGRPPLTSIDPDKVVAIGAAIQADILVGNKPDSEMLLLDVIPLSLGLETMGGLVEKVIPRNTTIPVARAQDFTTFKDGQTAMSIHVMQGERELVQDCRSLARFALRGIPALPAGGAHIRVTFQVDADGLLSVTAMEKSTGVEASIQVKPSYGLTDSEIASMIKDSMSYAEQDVKARMLAEQKVEAARVLESLHGALAADAALLSAAERQAIDDAAAHLSEVAQGDDVDAIEQAIKNVDKQTQDFAARRMDQSVRRALKGHSVDEV.

Belongs to the heat shock protein 70 family.

In terms of biological role, chaperone involved in the maturation of iron-sulfur cluster-containing proteins. Has a low intrinsic ATPase activity which is markedly stimulated by HscB. Involved in the maturation of IscU. In Escherichia coli O6:H1 (strain CFT073 / ATCC 700928 / UPEC), this protein is Chaperone protein HscA.